The sequence spans 616 residues: DEAD-box ATP-dependent RNA helicase 53, mitochondrial (616 aa).

Residues 1–81 (MITTVLRRSL…DFRASMVSQA (81 aa)) constitute a mitochondrion transit peptide. Positions 104–132 (LAISELGISPEIVKALSSKGIEKLFPIQK) match the Q motif motif. Residues 135–309 (LEPAMEGRDM…KKYLNNPLTV (175 aa)) enclose the Helicase ATP-binding domain. ATP is bound at residue 148-155 (ARTGTGKT). A DEAD box motif is present at residues 257–260 (DEAD). One can recognise a Helicase C-terminal domain in the interval 338–482 (IIGPLVTEHA…ELPSIAVERG (145 aa)). Residues 489–616 (GIGSRSGGSF…FGSNDGKRSY (128 aa)) are disordered. 2 stretches are compositionally biased toward gly residues: residues 492-501 (SRSGGSFGGG) and 508-531 (SFGGRSGGGGYGGSSGGYGGGRSG). Low complexity-rich tracts occupy residues 532-568 (GSSNRYSGDSDRSGFGSFGMRSPEGYGSDRSSQSGGR) and 578-587 (GSSNNRSSGF).

Belongs to the DEAD box helicase family. DDX21/DDX50 subfamily.

The protein localises to the mitochondrion. The catalysed reaction is ATP + H2O = ADP + phosphate + H(+). The polypeptide is DEAD-box ATP-dependent RNA helicase 53, mitochondrial (RH53) (Arabidopsis thaliana (Mouse-ear cress)).